The chain runs to 628 residues: Nucleoside-triphosphatase 1 (628 aa).

Positions methionine 1–glycine 25 are cleaved as a signal peptide. Glutamate 236 serves as the catalytic Proton acceptor. N-linked (GlcNAc...) asparagine glycosylation occurs at asparagine 432.

This sequence belongs to the GDA1/CD39 NTPase family. As to quaternary structure, homotetramer.

Its subcellular location is the secreted. It localises to the parasitophorous vacuole. It carries out the reaction a ribonucleoside 5'-triphosphate + H2O = a ribonucleoside 5'-diphosphate + phosphate + H(+). Functionally, may perform an important processing step in the conversion of high energy nucleotides prior to uptake by the parasite and may contribute to intracellular survival and virulence. NTPAse-I has a specific activity 4.5-fold higher than NTPAse-II in hydrolysis of ATP. The primary difference between these isozymes lies in their ability to hydrolyze nucleoside triphosphate versus diphosphate substrates. While NTPAse-II hydrolyzes ATP to ADP and ADP to AMP at almost the same rate, NTPAse-I hydrolyzes ADP to AMP at a much slower rate (0.7% of the rate for ATP). In Toxoplasma gondii, this protein is Nucleoside-triphosphatase 1 (NTP3).